The primary structure comprises 965 residues: Meiosis-specific coiled-coil domain-containing protein MEIOC (965 aa).

2 disordered regions span residues 1 to 22 and 946 to 965; these read MEVSGGDTCRPRHPQGLREGPE and VHESINSSNPMNQRGETSKH. The span at 949–965 shows a compositional bias: polar residues; that stretch reads SINSSNPMNQRGETSKH.

In terms of assembly, interacts with YTHDC2; binds transcripts that regulate the mitotic cell cycle inhibiting progression into metaphase, thereby allowing meiotic prophase to proceed normally. Interacts with RBM46. Expressed specifically in fetal ovary and postnatal and adult testes (at protein level). In adult testis expressed in spermatocytes, beginning in preleptotene and extending through most stages of meiotic prophase I, including leptotene, zygotene, and pachytene.

The protein localises to the cytoplasm. It localises to the nucleus. In terms of biological role, is required for meiosis completion in both male and female germ cells. Confers stability to numerous meiotic mRNAs in gonads allowing proper initiation and progression into meiosis prophase I. The function may involve YTHDC2 and is independent of induction by retinoic acid (RA). Maintains an extended meiotic prophase I by properly promoting the transition from a mitotic to a meiotic cell cycle program by binding transcripts through its interaction with YTHDC2 that regulate the mitotic cell cycle. The polypeptide is Meiosis-specific coiled-coil domain-containing protein MEIOC (Mus musculus (Mouse)).